We begin with the raw amino-acid sequence, 347 residues long: NADH-ubiquinone oxidoreductase chain 2 (347 aa).

The next 9 helical transmembrane spans lie at Ile-5 to Ile-22, Trp-26 to Met-45, Phe-60 to Leu-80, Asn-150 to Leu-170, Ile-178 to Pro-198, Leu-200 to Met-220, Leu-237 to Leu-257, Asp-274 to Met-294, and Pro-327 to Phe-347.

The protein belongs to the complex I subunit 2 family. Core subunit of respiratory chain NADH dehydrogenase (Complex I) which is composed of 45 different subunits. Interacts with TMEM242.

Its subcellular location is the mitochondrion inner membrane. It carries out the reaction a ubiquinone + NADH + 5 H(+)(in) = a ubiquinol + NAD(+) + 4 H(+)(out). Core subunit of the mitochondrial membrane respiratory chain NADH dehydrogenase (Complex I) which catalyzes electron transfer from NADH through the respiratory chain, using ubiquinone as an electron acceptor. Essential for the catalytic activity and assembly of complex I. The chain is NADH-ubiquinone oxidoreductase chain 2 from Martes zibellina (Sable).